Here is a 199-residue protein sequence, read N- to C-terminus: MEGEGVQPPDENLENGSRPRFKWKKVLRLVVSGIKAAGLLLCVVYVCLQFSSSPAKDSPIQRLRAPVTGCEGGRLFIGTSKNEYETMEVQNNSVIINCDGLYLIHLKGSFFQEVKINLHFRKDRSPIFVPMLNNGQRVVFTVVTSLAFKDEVYLTVNASDTLCEHLQINDGELIIVQLTPNGYCAPERPYSSTVNQVPL.

At 1–25 (MEGEGVQPPDENLENGSRPRFKWKK) the chain is on the cytoplasmic side. Residues 26–48 (VLRLVVSGIKAAGLLLCVVYVCL) traverse the membrane as a helical; Signal-anchor for type II membrane protein segment. The Extracellular portion of the chain corresponds to 49–199 (QFSSSPAKDS…YSSTVNQVPL (151 aa)). One can recognise a THD domain in the interval 59 to 176 (PIQRLRAPVT…QINDGELIIV (118 aa)). 2 cysteine pairs are disulfide-bonded: Cys-70-Cys-163 and Cys-98-Cys-184. Residues Asn-91 and Asn-157 are each glycosylated (N-linked (GlcNAc...) asparagine).

This sequence belongs to the tumor necrosis factor family. Homotrimer. As to expression, detected in T-cell lines, but not in a macrophage cell line.

The protein resides in the membrane. Cytokine that binds to TNFRSF4. Co-stimulates T-cell proliferation and cytokine production. The polypeptide is Tumor necrosis factor ligand superfamily member 4 (Tnfsf4) (Rattus norvegicus (Rat)).